Consider the following 246-residue polypeptide: uncharacterized protein (246 aa).

10–34 is an NADP(+) binding site; that stretch reads VITGASSGIGEETVNLLSENGAKLV. A substrate-binding site is contributed by Ser140. Tyr153 (proton acceptor) is an active-site residue.

Belongs to the short-chain dehydrogenases/reductases (SDR) family.

This is an uncharacterized protein from Staphylococcus saprophyticus subsp. saprophyticus (strain ATCC 15305 / DSM 20229 / NCIMB 8711 / NCTC 7292 / S-41).